The following is a 347-amino-acid chain: tRNA N6-adenosine threonylcarbamoyltransferase (347 aa).

Residues His113 and His117 each contribute to the Fe cation site. Substrate contacts are provided by residues 136 to 140, Asp170, Gly183, Asp187, and Asn282; that span reads LVSGG. Asp310 is a Fe cation binding site.

This sequence belongs to the KAE1 / TsaD family. Fe(2+) is required as a cofactor.

Its subcellular location is the cytoplasm. It carries out the reaction L-threonylcarbamoyladenylate + adenosine(37) in tRNA = N(6)-L-threonylcarbamoyladenosine(37) in tRNA + AMP + H(+). Functionally, required for the formation of a threonylcarbamoyl group on adenosine at position 37 (t(6)A37) in tRNAs that read codons beginning with adenine. Is involved in the transfer of the threonylcarbamoyl moiety of threonylcarbamoyl-AMP (TC-AMP) to the N6 group of A37, together with TsaE and TsaB. TsaD likely plays a direct catalytic role in this reaction. The polypeptide is tRNA N6-adenosine threonylcarbamoyltransferase (Cutibacterium acnes (strain DSM 16379 / KPA171202) (Propionibacterium acnes)).